A 513-amino-acid polypeptide reads, in one-letter code: Putative thymidine phosphorylase (513 aa).

Belongs to the thymidine/pyrimidine-nucleoside phosphorylase family. Type 2 subfamily.

The enzyme catalyses thymidine + phosphate = 2-deoxy-alpha-D-ribose 1-phosphate + thymine. The polypeptide is Putative thymidine phosphorylase (Bradyrhizobium diazoefficiens (strain JCM 10833 / BCRC 13528 / IAM 13628 / NBRC 14792 / USDA 110)).